We begin with the raw amino-acid sequence, 377 residues long: Methylthioribose-1-phosphate isomerase (377 aa).

Aspartate 254 functions as the Proton donor in the catalytic mechanism.

Belongs to the eIF-2B alpha/beta/delta subunits family. MtnA subfamily.

The protein resides in the cytoplasm. It is found in the nucleus. The enzyme catalyses 5-(methylsulfanyl)-alpha-D-ribose 1-phosphate = 5-(methylsulfanyl)-D-ribulose 1-phosphate. It participates in amino-acid biosynthesis; L-methionine biosynthesis via salvage pathway; L-methionine from S-methyl-5-thio-alpha-D-ribose 1-phosphate: step 1/6. In terms of biological role, catalyzes the interconversion of methylthioribose-1-phosphate (MTR-1-P) into methylthioribulose-1-phosphate (MTRu-1-P). This chain is Methylthioribose-1-phosphate isomerase (mri1), found in Aspergillus terreus (strain NIH 2624 / FGSC A1156).